A 445-amino-acid polypeptide reads, in one-letter code: GTPase Der (445 aa).

EngA-type G domains follow at residues 3 to 167 (PVIA…YADQ) and 180 to 353 (IKIA…AAAM). Residues 9 to 16 (GRPNVGKS), 56 to 60 (DTGGF), 119 to 122 (NKAE), 186 to 193 (GRPNVGKS), 233 to 237 (DTAGL), and 298 to 301 (NKWD) contribute to the GTP site. A KH-like domain is found at 354 to 438 (AKLPTPKLTR…PLRIEFRSST (85 aa)).

The protein belongs to the TRAFAC class TrmE-Era-EngA-EngB-Septin-like GTPase superfamily. EngA (Der) GTPase family. As to quaternary structure, associates with the 50S ribosomal subunit.

Its function is as follows. GTPase that plays an essential role in the late steps of ribosome biogenesis. The protein is GTPase Der of Burkholderia multivorans (strain ATCC 17616 / 249).